A 511-amino-acid chain; its full sequence is Putative thymidine phosphorylase 1 (511 aa).

This sequence belongs to the thymidine/pyrimidine-nucleoside phosphorylase family. Type 2 subfamily.

The catalysed reaction is thymidine + phosphate = 2-deoxy-alpha-D-ribose 1-phosphate + thymine. This is Putative thymidine phosphorylase 1 from Acidovorax sp. (strain JS42).